Here is a 116-residue protein sequence, read N- to C-terminus: Heme-degrading monooxygenase (116 aa).

The ABM domain maps to 2-92 (VIVTNTSKIT…EYILENKISF (91 aa)). Asparagine 6 contacts Fe cation. Histidine 76 serves as a coordination point for heme.

The protein belongs to the antibiotic biosynthesis monooxygenase family. Heme-degrading monooxygenase IsdG subfamily. Homodimer.

It localises to the cytoplasm. The enzyme catalyses heme b + 3 reduced [NADPH--hemoprotein reductase] + 3 O2 = biliverdin IXalpha + CO + Fe(2+) + 3 oxidized [NADPH--hemoprotein reductase] + 3 H2O + H(+). Its function is as follows. Allows bacterial pathogens to use the host heme as an iron source. Catalyzes the oxidative degradation of the heme macrocyclic porphyrin ring to the biliverdin in the presence of a suitable electron donor such as ascorbate or NADPH--cytochrome P450 reductase, with subsequent release of free iron. In Halalkalibacterium halodurans (strain ATCC BAA-125 / DSM 18197 / FERM 7344 / JCM 9153 / C-125) (Bacillus halodurans), this protein is Heme-degrading monooxygenase.